Reading from the N-terminus, the 69-residue chain is uncharacterized protein (69 aa).

The tract at residues 23-46 (AENEGNRKENRRQMQSRNERGCNV) is disordered. The segment covering 26–44 (EGNRKENRRQMQSRNERGC) has biased composition (basic and acidic residues).

This is an uncharacterized protein from Homo sapiens (Human).